The chain runs to 170 residues: Co-chaperone protein HscB homolog (170 aa).

Positions 5–79 constitute a J domain; sequence DHFSLFGLPA…RARYLCEQAG (75 aa).

This sequence belongs to the HscB family. Interacts with HscA and stimulates its ATPase activity.

Its function is as follows. Co-chaperone involved in the maturation of iron-sulfur cluster-containing proteins. Seems to help targeting proteins to be folded toward HscA. The polypeptide is Co-chaperone protein HscB homolog (Bordetella parapertussis (strain 12822 / ATCC BAA-587 / NCTC 13253)).